Consider the following 432-residue polypeptide: Short/branched chain specific acyl-CoA dehydrogenase, mitochondrial (432 aa).

The N-terminal 33 residues, 1–33, are a transit peptide targeting the mitochondrion; sequence MEGLAVRLLRGSRLLRRNFLTCLSSWKIPPHVS. Lys70 bears the N6-acetyllysine; alternate mark. Lys70 carries the N6-succinyllysine; alternate modification. FAD-binding positions include 174–183 and 207–209; these read FCLSEAGAGS and WIS. Ser183 lines the substrate pocket. Position 183 is a phosphoserine (Ser183). 2 residues coordinate substrate: Tyr229 and Tyr283. The residue at position 284 (Lys284) is an N6-acetyllysine; alternate. An N6-succinyllysine; alternate modification is found at Lys284. 291–294 is a substrate binding site; the sequence is NEGR. FAD-binding positions include Arg319, Gln330, and 387–391; that span reads EWMGG. Glu414 serves as the catalytic Proton acceptor. 416–418 lines the FAD pocket; it reads ASN. Lys426 carries the N6-acetyllysine modification.

It belongs to the acyl-CoA dehydrogenase family. Homotetramer. It depends on FAD as a cofactor. As to expression, ubiquitously expressed.

It is found in the mitochondrion matrix. The catalysed reaction is 2-methylbutanoyl-CoA + oxidized [electron-transfer flavoprotein] + H(+) = (2E)-2-methylbut-2-enoyl-CoA + reduced [electron-transfer flavoprotein]. The enzyme catalyses (2S)-2-methylbutanoyl-CoA + oxidized [electron-transfer flavoprotein] + H(+) = (2E)-2-methylbut-2-enoyl-CoA + reduced [electron-transfer flavoprotein]. It carries out the reaction (2R)-2-methylbutanoyl-CoA + oxidized [electron-transfer flavoprotein] + H(+) = ethylacryloyl-CoA + reduced [electron-transfer flavoprotein]. It catalyses the reaction butanoyl-CoA + oxidized [electron-transfer flavoprotein] + H(+) = (2E)-butenoyl-CoA + reduced [electron-transfer flavoprotein]. The catalysed reaction is 2-methylpropanoyl-CoA + oxidized [electron-transfer flavoprotein] + H(+) = 2-methylpropenoyl-CoA + reduced [electron-transfer flavoprotein]. The enzyme catalyses hexanoyl-CoA + oxidized [electron-transfer flavoprotein] + H(+) = (2E)-hexenoyl-CoA + reduced [electron-transfer flavoprotein]. It carries out the reaction 2-methylhexanoyl-CoA + oxidized [electron-transfer flavoprotein] + H(+) = 2-methylhexenoyl-CoA + reduced [electron-transfer flavoprotein]. It catalyses the reaction valproyl-CoA + oxidized [electron-transfer flavoprotein] + H(+) = (2E)-2-propylpent-2-enoyl-CoA + reduced [electron-transfer flavoprotein]. It participates in lipid metabolism; mitochondrial fatty acid beta-oxidation. Its pathway is amino-acid degradation; L-isoleucine degradation. With respect to regulation, competitively inhibited by valproyl-CoA. Short and branched chain specific acyl-CoA dehydrogenase that catalyzes the removal of one hydrogen from C-2 and C-3 of the fatty acyl-CoA thioester, resulting in the formation of trans-2-enoyl-CoA. Among the different mitochondrial acyl-CoA dehydrogenases, acts specifically on short and branched chain acyl-CoA derivatives such as (S)-2-methylbutyryl-CoA as well as short straight chain acyl-CoAs such as butyryl-CoA. Plays an important role in the metabolism of L-isoleucine by catalyzing the dehydrogenation of 2-methylbutyryl-CoA, one of the steps of the L-isoleucine catabolic pathway. Can also act on valproyl-CoA, a metabolite of valproic acid, an antiepileptic drug. This chain is Short/branched chain specific acyl-CoA dehydrogenase, mitochondrial, found in Homo sapiens (Human).